A 150-amino-acid polypeptide reads, in one-letter code: MTTEKKTMNISEIQELLPHRYPFLLIDRVIDFQEEKYLHAIKNVSVNEPQFTGHFPQLPVFPGVLILEAMAQATGLLAFKSFGAPTENELYYFASVDGAKFRKPVVPGDQMIIEVEFLKERRGIAAFKGVAKVDGEVVCSAELKCARREF.

H54 is an active-site residue.

This sequence belongs to the thioester dehydratase family. FabZ subfamily.

It is found in the cytoplasm. It carries out the reaction a (3R)-hydroxyacyl-[ACP] = a (2E)-enoyl-[ACP] + H2O. Its function is as follows. Involved in unsaturated fatty acids biosynthesis. Catalyzes the dehydration of short chain beta-hydroxyacyl-ACPs and long chain saturated and unsaturated beta-hydroxyacyl-ACPs. The sequence is that of 3-hydroxyacyl-[acyl-carrier-protein] dehydratase FabZ from Vibrio campbellii (strain ATCC BAA-1116).